A 1781-amino-acid polypeptide reads, in one-letter code: MISTAPLYSGVHNWTSSDRIRMCGINEERRAPLSDEESTTGGCQHFGSQEFCVSSSFSKVELTAVGSGSNARGTNPDGNTTEKLGHRSEDQSDDPQPKMDYVGNPAEAEGLLVPLSSPGDGLKLPTPDSTEASHSRANCSWTPLSTQMSKQVDCSPAGVKALDSRHGVGEKNTFILATLGTGVPVEGTLPLVTTNFSQLPAPICPPAPGSASGTPSVPDPFQVPLSVPAPVPHSGLVPVQVATSASAPSPPLAPAAPSVPTLISDSNPLSVSASVLVPVPVSAPHSVPVPLSAPAPTPLTVSVSAPPLALIQAPVPPSAPTLVLASVPTPVLAPMPASTPPAAPAPPSVPMPTPTPSSGPPSTPTLIPAFAPTPVPAPTPAPIFTPAPTPMPAATPAAIPTSAPIPASFSLSRVCFPAAQAPAMQKVPLSFQPGTVLTPNQPLVYIPPPSCGQPLSVATLPTTLGVSSTLTLPVLPSYLQDRCLPGVLASPDLRSYPCAFSVARPLASDSKLVSLEVNRLSCTSPSSSTNSQPAPDGVPGPLADTSLTTASAKVLPTSQLLLPAPSGSSVPPHPSKMPGGTDQQTEGTSVTFSPLKSPPQLEREMASPPECSEMPLDLSAKSNRQKLPLPNQRKTPPMPVLTPVHTSSKALLSTVLSRSQRTTQAAGSNVTSCLGSTSSPFVIFPEMVRNGDPSTWVKNSTALISTIPGTYVGVANPVPASLLLNKDPNLGLNRDPRHLPKQEPISIIDQGEPKSTSATCGKKGSQAGAEGQPSTVKSRYTPARIAPGLPGCQTKELSLWKPTGLTNMYPRCSINGKPTSTQVLPVGWSPYHQASLLSIGISSAGQLTPSQGVPIRPTSIVSEFSGVSPLGSSETVHGLPEGQPRPGGPFAPEQDAVTKNKNCRIAAKPYEEQVNPVLLTLSPQSGTLALSVQPSSGDMGVNQGSEESESHLCSDSTPKMEGPQAACGLKLAGDTKPKNQVLATYMSHELVLANPQNLCKMPELPLLPHDSHSKELILDVVPSSERGPSTDLSQLGSQVDLGRVKMEKADGDVVFNLANCFRADGLPAVPQRGQAEARANAGQARVKRESIGVFTCKNSWQPDEETESLPPKKVKCNKEKEIEEEPRQQPPPQPHDKPMVRSSLGSKCRKLPGDPQEPTKKSPRGALDSGKEHNGVRGKHKHRKPTKPESQPPGKRTDGHEEGSLEKKAKNSFRDFIPVVLSTRTRSQSGSICSSFAGMADSDMGSQEVFPTEEEEEVAPTPAKRRKVRKTQRDTQYRSHHAQDKTLLSQGRRHLWRAREMPWRTEAARQMWDTNEEEEDDEEEGLVKRKKRRRQKSRKYQTGEYLIEQEEQRRKGRADSKARKQKTSSQSSEHCLRNRNLLLSSKAQGISDSPNGFLPDNLEEPACLENPEKPSGKRKCKTKHMANASEEARSKGRWSQQKTRSSKSPTPVKPTEPCTPSKYRSAGPEEASESPTARQIPPEARRLIVNKNAGETLLQRAARLGYKDVVLYCLQKHSEDVNHRDNAGYTALHEACSRGWTDILNILLQHGANVNCSSQDGTRPVHDAVVNDNLETIWLLLSYGADPTLATYSGQTAMKLASSDNMKRFLSDHLSDLQGRAEGDPRASWDFYSSSVLEKKDGFACDLLHNPPGSAEQGDDSEQDDFMFELSDKPLLPCYNLQVSVSRGPCNWFLFSDVLKRLKLSSRIFQARFPHLEITTLPKAEFYRQVASSQLLSPAERPGSLEDRSPPGSSETVELVQYEPELLRLLGSEVEYQSWSS.

2 disordered regions span residues Ala64–Arg136 and Ala337–Ser362. Polar residues-rich tracts occupy residues Gly66 to Glu82 and Pro127 to Arg136. Ser490 carries the post-translational modification Phosphoserine. Over residues Ser521 to Ser531 the composition is skewed to low complexity. Disordered regions lie at residues Ser521–Thr545, Leu561–Leu616, Asn733–Lys777, Pro869–Asp895, and Gln933–Met960. The segment covering Thr581–Pro594 has biased composition (polar residues). Phosphoserine is present on residues Ser593 and Ser607. Lys741 is covalently cross-linked (Glycyl lysine isopeptide (Lys-Gly) (interchain with G-Cter in SUMO2)). Position 1024 is a phosphoserine (Ser1024). Residue Lys1087 forms a Glycyl lysine isopeptide (Lys-Gly) (interchain with G-Cter in SUMO2) linkage. The segment at Trp1100 to Ala1484 is disordered. A compositionally biased stretch (basic and acidic residues) spans Cys1116 to Arg1127. Ser1162 is modified (phosphoserine). Over residues Val1176 to Pro1185 the composition is skewed to basic residues. Over residues Lys1195–Phe1213 the composition is skewed to basic and acidic residues. The span at Ser1222–Ser1234 shows a compositional bias: polar residues. Basic and acidic residues-rich tracts occupy residues Thr1271 to Asp1284 and Arg1297 to Ala1307. Residues Thr1314 to Glu1324 are compositionally biased toward acidic residues. Positions Lys1328–Lys1339 are enriched in basic residues. Residues Glu1350 to Ala1362 show a composition bias toward basic and acidic residues. 2 stretches are compositionally biased toward polar residues: residues Leu1381 to Pro1394 and Arg1437 to Pro1449. ANK repeat units follow at residues Ala1493–His1523, Ala1527–Cys1556, and Asp1560–Leu1589. Residues Asp1664 to Ser1781 form a PCGF Ub-like fold domain (PUFD); required for the interaction with the KDM2B-SKP1 heterodimeric complex region.

The protein belongs to the BCOR family. As to quaternary structure, interacts with PCGF1, forming heterodimers. The PCGF1-BCORL1 heterodimeric complex interacts with the KDM2B-SKP1 heterodimeric complex to form a homotetrameric polycomb repression complex 1 (PRC1.1). Interacts with SKP1. Interacts with CTBP1, HDAC4, HDAC5 and HDAC7. In terms of tissue distribution, highly expressed in lung and testis.

The protein resides in the nucleus. In terms of biological role, transcriptional corepressor. May specifically inhibit gene expression when recruited to promoter regions by sequence specific DNA-binding proteins such as BCL6. This repression may be mediated at least in part by histone deacetylase activities which can associate with this corepressor. This Mus musculus (Mouse) protein is BCL-6 corepressor-like protein 1 (Bcorl1).